The following is a 61-amino-acid chain: Probable pancreatic secretory proteinase inhibitor (61 aa).

The region spanning 6–61 is the Kazal-like domain; sequence LYRKPSCGEMSAMHACPMNFAPVCGTDGNTYPNECSLCFQRQNTKTDILITKDDRC. Intrachain disulfides connect cysteine 12–cysteine 43, cysteine 21–cysteine 40, and cysteine 29–cysteine 61.

It localises to the secreted. The polypeptide is Probable pancreatic secretory proteinase inhibitor (Anguilla anguilla (European freshwater eel)).